Here is a 3718-residue protein sequence, read N- to C-terminus: Laminin subunit alpha-5 (3718 aa).

Positions 1-40 (MAKRGGQLCAGSAPGALGPRSPAPRPLLLLLAGLALVGEA) are cleaved as a signal peptide. The region spanning 46-304 (DGFSLHPPYF…SIKDISIGGR (259 aa)) is the Laminin N-terminal domain. 3 N-linked (GlcNAc...) asparagine glycosylation sites follow: Asn100, Asn148, and Asn248. 12 disulfides stabilise this stretch: Cys305/Cys314, Cys307/Cys327, Cys329/Cys338, Cys341/Cys361, Cys364/Cys373, Cys366/Cys398, Cys401/Cys410, Cys413/Cys431, Cys434/Cys445, Cys436/Cys452, Cys454/Cys463, and Cys466/Cys476. Laminin EGF-like domains are found at residues 305 to 363 (CVCH…ECQS), 364 to 433 (CNCH…VCRP), and 434 to 479 (CDCE…CYPL). Residue Asn383 is glycosylated (N-linked (GlcNAc...) asparagine). N-linked (GlcNAc...) asparagine glycosylation occurs at Asn457. Asn485 is a glycosylation site (N-linked (GlcNAc...) asparagine). Cystine bridges form between Cys500-Cys512, Cys502-Cys521, Cys523-Cys532, Cys535-Cys544, Cys547-Cys559, Cys549-Cys566, Cys568-Cys577, Cys580-Cys590, Cys593-Cys605, Cys595-Cys611, Cys613-Cys622, Cys625-Cys635, Cys638-Cys650, Cys640-Cys656, Cys658-Cys667, Cys670-Cys680, Cys683-Cys695, Cys685-Cys702, Cys704-Cys713, Cys716-Cys731, Cys752-Cys761, Cys764-Cys779, Cys782-Cys796, Cys784-Cys802, Cys804-Cys813, Cys816-Cys831, Cys834-Cys846, Cys836-Cys853, and Cys855-Cys864. Laminin EGF-like domains lie at 500–546 (CDCN…SCHP), 547–592 (CQCS…LCQL), 593–637 (CGCS…DCHA), 638–682 (CACD…SCIP), 683–728 (CHCS…YCEA), 729–781 (GSCH…GCTR), and 782–833 (CSCD…GCRS). In terms of domain architecture, Laminin EGF-like 11; truncated spans 834-855 (CRCDVGGALGQGCEPKTGACRC). Residues 856–1442 (RPNTQGPTCS…SLFYNNGALP (587 aa)) form a domain IV 1 (domain IV B) region. 3 N-linked (GlcNAc...) asparagine glycosylation sites follow: Asn905, Asn926, and Asn964. Residues 1253–1284 (LTQSQELSPGAPPEGPQPRPPTAVDPNAEPTL) form a disordered region. The segment covering 1262-1275 (GAPPEGPQPRPPTA) has biased composition (pro residues). N-linked (GlcNAc...) asparagine glycosylation occurs at Asn1335. Intrachain disulfides connect Cys1443–Cys1455, Cys1445–Cys1462, Cys1464–Cys1473, Cys1476–Cys1486, Cys1489–Cys1496, Cys1491–Cys1503, Cys1505–Cys1514, Cys1517–Cys1530, Cys1533–Cys1548, Cys1535–Cys1555, Cys1557–Cys1566, Cys1569–Cys1579, Cys1582–Cys1594, Cys1584–Cys1601, Cys1603–Cys1612, and Cys1615–Cys1630. Laminin EGF-like domains follow at residues 1443 to 1488 (CGCH…NCRP), 1489 to 1532 (CDCG…GCEE), 1533 to 1581 (CNCS…SCRP), and 1582 to 1632 (CDCH…GCTR). Asn1534 is a glycosylation site (N-linked (GlcNAc...) asparagine). The Laminin EGF-like 16; first part domain occupies 1633–1642 (CFCFGATERC). Residues 1646–1831 (NLARHEFVDM…RGPPASNVEL (186 aa)) enclose the Laminin IV type A domain. 2 consecutive short sequence motifs (cell attachment site) follow at residues 1723–1725 (RGD) and 1839–1841 (RGD). The Laminin EGF-like 16; second part domain maps to 1832-1864 (CMCPANYRGDSCQECAPGYYRDTKGLFLGRCVP). 24 disulfide bridges follow: Cys1865–Cys1874, Cys1867–Cys1881, Cys1884–Cys1893, Cys1896–Cys1912, Cys1915–Cys1930, Cys1917–Cys1939, Cys1941–Cys1950, Cys1953–Cys1968, Cys1971–Cys1986, Cys1973–Cys1993, Cys1996–Cys2005, Cys2008–Cys2022, Cys2025–Cys2035, Cys2027–Cys2042, Cys2044–Cys2053, Cys2056–Cys2069, Cys2072–Cys2083, Cys2074–Cys2090, Cys2092–Cys2101, Cys2104–Cys2116, Cys2119–Cys2126, Cys2121–Cys2133, Cys2135–Cys2144, and Cys2147–Cys2166. Laminin EGF-like domains are found at residues 1865–1914 (CQCH…PCVS), 1915–1970 (CPCP…SCQP), 1971–2024 (CDCS…NCTR), 2025–2071 (CDCS…GCRP), 2072–2118 (CACG…GCRR), and 2119–2168 (CQCP…HCEV). Asn2021 is a glycosylation site (N-linked (GlcNAc...) asparagine). The interval 2169 to 2735 (CDHCVVLLLD…AQARSAASKV (567 aa)) is domain II and I. Asn2198, Asn2211, Asn2365, Asn2395, Asn2425, Asn2503, and Asn2570 each carry an N-linked (GlcNAc...) asparagine glycan. Coiled-coil stretches lie at residues 2205–2257 (ARLH…SQAT) and 2330–2464 (TRDL…ASLD). Coiled coils occupy residues 2604-2621 (ARKN…AMLA) and 2639-2705 (AEAL…LENR). N-linked (GlcNAc...) asparagine glycosylation is present at Asn2709. Laminin G-like domains follow at residues 2736–2933 (KVSM…DKPC), 2947–3119 (GSYL…SFGC), 3128–3296 (TMTF…SVGC), 3337–3511 (AYQF…VTPC), and 3518–3689 (DGLF…MRGC). 2 cysteine pairs are disulfide-bonded: Cys2903-Cys2933 and Cys3094-Cys3119. N-linked (GlcNAc...) asparagine glycans are attached at residues Asn3111, Asn3213, Asn3261, and Asn3291. 2 disulfide bridges follow: Cys3265-Cys3296 and Cys3488-Cys3511. N-linked (GlcNAc...) asparagine glycosylation is found at Asn3623 and Asn3673. An intrachain disulfide couples Cys3661 to Cys3689.

In terms of assembly, laminin is a complex glycoprotein, consisting of three different polypeptide chains (alpha, beta, gamma), which are bound to each other by disulfide bonds into a cross-shaped molecule comprising one long and three short arms with globules at each end. Alpha-5 is a subunit of laminin-10 (laminin-511), laminin-11 (laminin-521) and laminin-15 (laminin-523). As to expression, in adult, high levels in heart, lung, and kidney; lower in brain, muscle and testis; very low in liver, gut and skin.

Its subcellular location is the secreted. The protein localises to the extracellular space. The protein resides in the extracellular matrix. It is found in the basement membrane. In terms of biological role, binding to cells via a high affinity receptor, laminin is thought to mediate the attachment, migration and organization of cells into tissues during embryonic development by interacting with other extracellular matrix components. Alpha-5 may be the major laminin alpha chain of adult epithelial and/or endothelial basal laminae. Plays a role in the regulation of skeletogenesis, through a mechanism that involves integrin-mediated signaling and PTK2B/PYK2. In Mus musculus (Mouse), this protein is Laminin subunit alpha-5 (Lama5).